We begin with the raw amino-acid sequence, 120 residues long: Large ribosomal subunit protein bL17 (120 aa).

This sequence belongs to the bacterial ribosomal protein bL17 family. As to quaternary structure, part of the 50S ribosomal subunit. Contacts protein L32.

The sequence is that of Large ribosomal subunit protein bL17 from Halalkalibacterium halodurans (strain ATCC BAA-125 / DSM 18197 / FERM 7344 / JCM 9153 / C-125) (Bacillus halodurans).